Here is a 598-residue protein sequence, read N- to C-terminus: Elongation factor 4 (598 aa).

The tr-type G domain maps to 4–181 (SKIRNFSIIA…AVIEKIPAPK (178 aa)). Residues 16–21 (DHGKST) and 128–131 (NKID) each bind GTP.

It belongs to the TRAFAC class translation factor GTPase superfamily. Classic translation factor GTPase family. LepA subfamily.

It is found in the cell membrane. It carries out the reaction GTP + H2O = GDP + phosphate + H(+). In terms of biological role, required for accurate and efficient protein synthesis under certain stress conditions. May act as a fidelity factor of the translation reaction, by catalyzing a one-codon backward translocation of tRNAs on improperly translocated ribosomes. Back-translocation proceeds from a post-translocation (POST) complex to a pre-translocation (PRE) complex, thus giving elongation factor G a second chance to translocate the tRNAs correctly. Binds to ribosomes in a GTP-dependent manner. This is Elongation factor 4 from Mycoplasma mobile (strain ATCC 43663 / 163K / NCTC 11711) (Mesomycoplasma mobile).